We begin with the raw amino-acid sequence, 499 residues long: Alpha-amylase B (499 aa).

The N-terminal stretch at 1–21 (MMVAWWSLFLYGLQVAAPALA) is a signal peptide. Cys-51 and Cys-59 are oxidised to a cystine. Gln-56 and Trp-104 together coordinate substrate. Residue Asn-142 coordinates Ca(2+). His-143 is a substrate binding site. An intrachain disulfide couples Cys-171 to Cys-185. Ca(2+) contacts are provided by Glu-183 and Asp-196. N-linked (GlcNAc...) asparagine glycosylation is present at Asn-218. Arg-225 provides a ligand contact to substrate. The Ca(2+) site is built by Asp-227, His-231, and Glu-251. The Nucleophile role is filled by Asp-227. Residue 230–231 (KH) participates in substrate binding. The active-site Proton donor is Glu-251. Gly-255 lines the substrate pocket. An intrachain disulfide couples Cys-261 to Cys-304. Asp-318 and Arg-365 together coordinate substrate. Cys-461 and Cys-496 are joined by a disulfide.

It belongs to the glycosyl hydrolase 13 family. It depends on Ca(2+) as a cofactor.

The catalysed reaction is Endohydrolysis of (1-&gt;4)-alpha-D-glucosidic linkages in polysaccharides containing three or more (1-&gt;4)-alpha-linked D-glucose units.. The polypeptide is Alpha-amylase B (amyB) (Aspergillus awamori (Black koji mold)).